The chain runs to 183 residues: Small acidic protein (183 aa).

Positions 1 to 183 are disordered; sequence MSAARESHPH…KMMFVKSSGS (183 aa). K13 participates in a covalent cross-link: Glycyl lysine isopeptide (Lys-Gly) (interchain with G-Cter in SUMO2). S15 and S17 each carry phosphoserine. A compositionally biased stretch (basic and acidic residues) spans 48 to 78; that stretch reads GKKEHTGRLVIGDHKSTSHFRTGEEDKKINE. K62 participates in a covalent cross-link: Glycyl lysine isopeptide (Lys-Gly) (interchain with G-Cter in SUMO2). A Phosphoserine modification is found at S63. Residue K75 forms a Glycyl lysine isopeptide (Lys-Gly) (interchain with G-Cter in SUMO2) linkage. Residues S87, S127, and S147 each carry the phosphoserine modification. A compositionally biased stretch (acidic residues) spans 106–149; that stretch reads EVEDHDGEGDVAGDDDDNDDDSPDPESPDDSESDSESEKEESAE. A compositionally biased stretch (basic and acidic residues) spans 153–171; the sequence is AAEHPDEVEDPKNKKDAKS. N6-acetyllysine occurs at positions 174 and 179.

The protein belongs to the SMAP family.

The sequence is that of Small acidic protein (SMAP) from Pongo abelii (Sumatran orangutan).